Reading from the N-terminus, the 294-residue chain is 4-hydroxybenzoate octaprenyltransferase (294 aa).

Helical transmembrane passes span 20-42 (LLRIDRPIGTLLLLWPTYWALWL), 98-118 (WEAVALFAGLCLVSFLMVVLF), 120-140 (NTLTLYLSFGGALLAFIYPFM), 145-165 (HLPQLFLGAAFSWAIPMAWAA), 175-195 (WLLFTANVLWTVAYDTLYAMV), 218-238 (AIIALLQTMVVVILVMVGQRA), 242-262 (SFYYLGVVAMATLFVYHQYLA), and 274-294 (FLNNNWAGFAVFLGLALDLAF).

It belongs to the UbiA prenyltransferase family. Mg(2+) serves as cofactor.

It is found in the cell inner membrane. It catalyses the reaction all-trans-octaprenyl diphosphate + 4-hydroxybenzoate = 4-hydroxy-3-(all-trans-octaprenyl)benzoate + diphosphate. It participates in cofactor biosynthesis; ubiquinone biosynthesis. Its function is as follows. Catalyzes the prenylation of para-hydroxybenzoate (PHB) with an all-trans polyprenyl group. Mediates the second step in the final reaction sequence of ubiquinone-8 (UQ-8) biosynthesis, which is the condensation of the polyisoprenoid side chain with PHB, generating the first membrane-bound Q intermediate 3-octaprenyl-4-hydroxybenzoate. The sequence is that of 4-hydroxybenzoate octaprenyltransferase from Marinobacter nauticus (strain ATCC 700491 / DSM 11845 / VT8) (Marinobacter aquaeolei).